The following is a 556-amino-acid chain: Riboflavin biosynthesis protein RibBA (556 aa).

A DHBP synthase region spans residues 1 to 202 (MFDAIDAALA…IADLISYRLQ (202 aa)). D-ribulose 5-phosphate is bound by residues 26–27 (RE), D31, 141–145 (RAGHT), and E165. Mg(2+) is bound at residue E27. H144 serves as a coordination point for Mg(2+). A GTP cyclohydrolase II region spans residues 203–402 (HDRFVQRETI…AEKLGHWLVK (200 aa)). 255–259 (RMHSE) is a GTP binding site. Residues C260, C271, and C273 each coordinate Zn(2+). GTP contacts are provided by residues Q276, 298–300 (EGR), and T320. D332 (proton acceptor; for GTP cyclohydrolase activity) is an active-site residue. Catalysis depends on R334, which acts as the Nucleophile; for GTP cyclohydrolase activity. The GTP site is built by T355 and K360. The segment at 403 to 556 (NYLLAIAIKF…KQGSGEMTNR (154 aa)) is unknown.

This sequence in the N-terminal section; belongs to the DHBP synthase family. It in the central section; belongs to the GTP cyclohydrolase II family. The cofactor is Mg(2+). Mn(2+) is required as a cofactor. It depends on Zn(2+) as a cofactor.

The catalysed reaction is D-ribulose 5-phosphate = (2S)-2-hydroxy-3-oxobutyl phosphate + formate + H(+). The enzyme catalyses GTP + 4 H2O = 2,5-diamino-6-hydroxy-4-(5-phosphoribosylamino)-pyrimidine + formate + 2 phosphate + 3 H(+). It functions in the pathway cofactor biosynthesis; riboflavin biosynthesis; 2-hydroxy-3-oxobutyl phosphate from D-ribulose 5-phosphate: step 1/1. It participates in cofactor biosynthesis; riboflavin biosynthesis; 5-amino-6-(D-ribitylamino)uracil from GTP: step 1/4. Catalyzes the conversion of D-ribulose 5-phosphate to formate and 3,4-dihydroxy-2-butanone 4-phosphate. Functionally, catalyzes the conversion of GTP to 2,5-diamino-6-ribosylamino-4(3H)-pyrimidinone 5'-phosphate (DARP), formate and pyrophosphate. This is Riboflavin biosynthesis protein RibBA (ribBA) from Synechocystis sp. (strain ATCC 27184 / PCC 6803 / Kazusa).